The chain runs to 943 residues: Conidiophore development regulator abaA (943 aa).

Disordered regions lie at residues 1–69 (MSSS…FNGG) and 111–133 (TSRQ…HQRG). Residues 29 to 43 (IDTRRSFHGDSRLPL) are compositionally biased toward basic and acidic residues. A compositionally biased stretch (polar residues) spans 59-68 (PSSAHSSFNG). Residues 161–254 (QKDKGGVWRR…QVVKKFFEDL (94 aa)) constitute a DNA-binding region (TEA). Residues 537-555 (EHQRKKEKRSCGKKPDLER) are compositionally biased toward basic and acidic residues. Disordered regions lie at residues 537–575 (EHQR…AAWT) and 809–901 (GAAG…HHPG). Residues 865 to 889 (DSWTAGSSAGGAPAATPTGPDWGPT) show a composition bias toward low complexity.

The protein belongs to the TEC1 family.

The protein localises to the nucleus. Its function is as follows. BrlA, abaA and wetA are pivotal regulators of conidiophore development and conidium maturation. They act individually and together to regulate their own expression and that of numerous other sporulation-specific genes. Binds to the sequence 5'-CATTCY-3', where Y is a pyrimidine, making both major- and minor-groove contacts. The sequence is that of Conidiophore development regulator abaA from Hapsidospora chrysogena (Acremonium chrysogenum).